We begin with the raw amino-acid sequence, 209 residues long: MSIEKQVAEQLLEIKAVFLKPNEPFTWASGIKSPIYCDNRLTLGFPKVRQFIAKSLAEKIKENFGEVDVVAGTATAGIPHAAWVSDLLDLPMVYVRSKAKEHGKGNQIEGPLTKGQKVVVIEDLISTGGSSLKAVEALEEAGAEVLGIAAIFTYGLDKGKKLLEESNTKLVTLTNYDELIEVALNKNYVTTEDMATLKEWKKNPEVWGK.

5-phospho-alpha-D-ribose 1-diphosphate-binding positions include arginine 96, lysine 100, histidine 102, and 122–130 (EDLISTGGS). Serine 126 contributes to the orotate binding site.

The protein belongs to the purine/pyrimidine phosphoribosyltransferase family. PyrE subfamily. Homodimer. Requires Mg(2+) as cofactor.

The enzyme catalyses orotidine 5'-phosphate + diphosphate = orotate + 5-phospho-alpha-D-ribose 1-diphosphate. The protein operates within pyrimidine metabolism; UMP biosynthesis via de novo pathway; UMP from orotate: step 1/2. Its function is as follows. Catalyzes the transfer of a ribosyl phosphate group from 5-phosphoribose 1-diphosphate to orotate, leading to the formation of orotidine monophosphate (OMP). The polypeptide is Orotate phosphoribosyltransferase (Listeria innocua serovar 6a (strain ATCC BAA-680 / CLIP 11262)).